The following is a 395-amino-acid chain: RNA polymerase II elongation factor ELL3 (395 aa).

Disordered regions lie at residues 124–149 (SSLQRHNRTEDARDRESWQNVGDYPE), 163–182 (VPDPLASSQGQSLPGSSREH), 194–218 (LPNRDPDQALPPSASQKHVDKKRPA), and 233–279 (LAPS…SLSP). Residues 130–140 (NRTEDARDRES) show a composition bias toward basic and acidic residues. Residues 168-177 (ASSQGQSLPG) show a composition bias toward polar residues. A compositionally biased stretch (acidic residues) spans 246–258 (LQEEDWEQEDKDE). Positions 268–277 (PSVQADSESL) are enriched in polar residues. The 111-residue stretch at 283 to 393 (PDYLLQYRAI…LILEFEEKNR (111 aa)) folds into the OCEL domain.

This sequence belongs to the ELL/occludin family. Interacts with AFF4. Component of the super elongation complex (SEC), at least composed of EAF1, EAF2, CDK9, MLLT3/AF9, AFF (AFF1 or AFF4), the P-TEFb complex and ELL (ELL, ELL2 or ELL3). Component of the little elongation complex (LEC), at least composed of ELL (ELL, ELL2 or ELL3), ZC3H8, ICE1 and ICE2.

It localises to the nucleus. Its function is as follows. Enhancer-binding elongation factor that specifically binds enhancers in embryonic stem cells (ES cells), marks them, and is required for their future activation during stem cell specification. Elongation factor component of the super elongation complex (SEC), a complex required to increase the catalytic rate of RNA polymerase II transcription by suppressing transient pausing by the polymerase at multiple sites along the DNA. Component of the little elongation complex (LEC), a complex required to regulate small nuclear RNA (snRNA) gene transcription by RNA polymerase II and III. Does not only bind to enhancer regions of active genes, but also marks the enhancers that are in a poised or inactive state in ES cells and is required for establishing proper RNA polymerase II occupancy at developmentally regulated genes in a cohesin-dependent manner. Probably required for priming developmentally regulated genes for later recruitment of the super elongation complex (SEC), for transcriptional activation during differentiation. Required for recruitment of P-TEFb within SEC during differentiation. Probably preloaded on germ cell chromatin, suggesting that it may prime gene activation by marking enhancers as early as in the germ cells. Promoting epithelial-mesenchymal transition (EMT). This is RNA polymerase II elongation factor ELL3 (ELL3) from Bos taurus (Bovine).